We begin with the raw amino-acid sequence, 551 residues long: MFSGLTNQFTSLVGAVKGGAGDEDVPAPTGDAPAAAPAASTSVEATASSAVDPEAAAAAGGEGLEGEEAGKRLPKSASLVDSLVSEATGWLGSAKGWLGNASIPSMPAMPSMPSMPAMPAMPSIPSIPGLRKGAGADGAEGAEGAVAGEGGAAASGAVSGGEDDDKSRYISATEGADSHPASGGGTPTGDEGQIGQGKGDEVKITTKVTQQAKHFGSFLSSAISKAGSKIKETVKDNTILDSFNKEQEAFIKGQGGVGNGAAPWIGHANEAKIKEEILGLSQDRRNFVRAPPAGVDFEFSYDTAYPTAIAIMAEDKALETMRFELVPKIITEENFWRNYFYRVSLIIQAAELGTLGADGVGQASSGEDANEVATKEKKSKTAEPAKGDSSVKAIAEQPKAVIEPEAQECDVQAAKSKAKAKAQAGKELGQKISESEFVSDDFQASSESDLAEIQDGMRKLGIDSMTQQALAATDEEQWEKDLEAELKDYEVVDEGGTGGDGGGGRRKGRKAGEDDTEADEDEPTISNLRTRSTNNDWEEYADLIEDTDDLK.

Disordered regions lie at residues 20–72 and 117–198; these read AGDE…AGKR and AMPA…GQGK. Low complexity-rich tracts occupy residues 26 to 59, 117 to 128, and 137 to 146; these read PAPT…AAAA, AMPAMPSIPSIP, and DGAEGAEGAV. Phosphoserine is present on residues serine 178 and serine 182. Gly residues predominate over residues 182-197; it reads SGGGTPTGDEGQIGQG. A Phosphothreonine modification is found at threonine 186. Residues 295–347 enclose the BSD domain; it reads VDFEFSYDTAYPTAIAIMAEDKALETMRFELVPKIITEENFWRNYFYRVSLII. The tract at residues 360–391 is disordered; the sequence is VGQASSGEDANEVATKEKKSKTAEPAKGDSSV. The span at 373–386 shows a compositional bias: basic and acidic residues; that stretch reads ATKEKKSKTAEPAK. At serine 433 the chain carries Phosphoserine. Positions 487-551 are disordered; it reads KDYEVVDEGG…DLIEDTDDLK (65 aa). Residues 514-523 show a composition bias toward acidic residues; sequence DDTEADEDEP. Residues 524 to 535 are compositionally biased toward polar residues; the sequence is TISNLRTRSTNN. A Phosphothreonine modification is found at threonine 530. The segment covering 536 to 551 has biased composition (acidic residues); sequence DWEEYADLIEDTDDLK.

Expressed specifically in neurons and transported to synaptic terminals.

This chain is Synapse-associated protein of 47 kDa (Sap47), found in Drosophila melanogaster (Fruit fly).